The primary structure comprises 924 residues: Nodulation receptor kinase (924 aa).

The first 29 residues, 1 to 29 (MMELRVICIIRLVVACVLCLCIFIRSASS), serve as a signal peptide directing secretion. Residues 361-382 (EVIQKMRKELLLQNQDNEALES) adopt a coiled-coil conformation. LRR repeat units lie at residues 406 to 428 (VITK…VTEM), 430 to 452 (KLQI…PPSS), 453 to 475 (LLIS…IISL), and 477 to 498 (HLNS…AKLN). Residues 520 to 540 (FMIGAITSGSILITLAVVILF) traverse the membrane as a helical segment. The Protein kinase domain occupies 595-872 (EKYKTLIGEG…IVRELEDALI (278 aa)). Residues 601-609 (IGEGGFGSV) and Lys623 each bind ATP. The active-site Proton acceptor is the Asp721.

It belongs to the protein kinase superfamily. Ser/Thr protein kinase family. Post-translationally, may be phosphorylated.

The protein resides in the membrane. The enzyme catalyses L-seryl-[protein] + ATP = O-phospho-L-seryl-[protein] + ADP + H(+). It catalyses the reaction L-threonyl-[protein] + ATP = O-phospho-L-threonyl-[protein] + ADP + H(+). Its function is as follows. Involved in the perception of symbiotic fungi and bacteria and required for the calcium spiking. Part of the perception/transduction system leading to nodulation or mycorrhizal infection. The chain is Nodulation receptor kinase (NORK) from Pisum sativum (Garden pea).